Reading from the N-terminus, the 152-residue chain is Superoxide dismutase [Cu-Zn] 4A (152 aa).

3 residues coordinate Cu cation: His45, His47, and His62. A disulfide bridge connects residues Cys56 and Cys145. Positions 62, 70, 79, and 82 each coordinate Zn(2+). His119 is a binding site for Cu cation.

It belongs to the Cu-Zn superoxide dismutase family. Homodimer. It depends on Cu cation as a cofactor. Requires Zn(2+) as cofactor.

It is found in the cytoplasm. The enzyme catalyses 2 superoxide + 2 H(+) = H2O2 + O2. In terms of biological role, destroys radicals which are normally produced within the cells and which are toxic to biological systems. The sequence is that of Superoxide dismutase [Cu-Zn] 4A (SODCC.3) from Zea mays (Maize).